The following is a 232-amino-acid chain: 6-phosphogluconolactonase (232 aa).

Belongs to the glucosamine/galactosamine-6-phosphate isomerase family. 6-phosphogluconolactonase subfamily.

The enzyme catalyses 6-phospho-D-glucono-1,5-lactone + H2O = 6-phospho-D-gluconate + H(+). It functions in the pathway carbohydrate degradation; pentose phosphate pathway; D-ribulose 5-phosphate from D-glucose 6-phosphate (oxidative stage): step 2/3. Functionally, hydrolysis of 6-phosphogluconolactone to 6-phosphogluconate. The sequence is that of 6-phosphogluconolactonase (pgl) from Rhizobium meliloti (strain 1021) (Ensifer meliloti).